The sequence spans 576 residues: Arginine--tRNA ligase (576 aa).

The 'HIGH' region motif lies at 122-132 (PNVAKQMHVGH).

It belongs to the class-I aminoacyl-tRNA synthetase family. As to quaternary structure, monomer.

Its subcellular location is the cytoplasm. The enzyme catalyses tRNA(Arg) + L-arginine + ATP = L-arginyl-tRNA(Arg) + AMP + diphosphate. This is Arginine--tRNA ligase from Yersinia enterocolitica serotype O:8 / biotype 1B (strain NCTC 13174 / 8081).